Here is a 254-residue protein sequence, read N- to C-terminus: 5-oxoprolinase subunit A (254 aa).

The protein belongs to the LamB/PxpA family. As to quaternary structure, forms a complex composed of PxpA, PxpB and PxpC.

It catalyses the reaction 5-oxo-L-proline + ATP + 2 H2O = L-glutamate + ADP + phosphate + H(+). In terms of biological role, catalyzes the cleavage of 5-oxoproline to form L-glutamate coupled to the hydrolysis of ATP to ADP and inorganic phosphate. This is 5-oxoprolinase subunit A from Gluconobacter oxydans (strain 621H) (Gluconobacter suboxydans).